The sequence spans 279 residues: Large ribosomal subunit protein uL2 (279 aa).

Residues 202-279 (NASIGKAGRS…TSRHKSKKKG (78 aa)) form a disordered region. Over residues 209-220 (GRSRWLGRRPHN) the composition is skewed to basic residues.

This sequence belongs to the universal ribosomal protein uL2 family. Part of the 50S ribosomal subunit. Forms a bridge to the 30S subunit in the 70S ribosome.

In terms of biological role, one of the primary rRNA binding proteins. Required for association of the 30S and 50S subunits to form the 70S ribosome, for tRNA binding and peptide bond formation. It has been suggested to have peptidyltransferase activity; this is somewhat controversial. Makes several contacts with the 16S rRNA in the 70S ribosome. The sequence is that of Large ribosomal subunit protein uL2 from Methylocella silvestris (strain DSM 15510 / CIP 108128 / LMG 27833 / NCIMB 13906 / BL2).